Here is a 530-residue protein sequence, read N- to C-terminus: Autoinducer-2 kinase (530 aa).

Belongs to the FGGY kinase family.

The protein localises to the cytoplasm. It carries out the reaction (S)-4,5-dihydroxypentane-2,3-dione + ATP = (2S)-2-hydroxy-3,4-dioxopentyl phosphate + ADP + H(+). In terms of biological role, catalyzes the phosphorylation of autoinducer-2 (AI-2) to phospho-AI-2, which subsequently inactivates the transcriptional regulator LsrR and leads to the transcription of the lsr operon. Phosphorylates the ring-open form of (S)-4,5-dihydroxypentane-2,3-dione (DPD), which is the precursor to all AI-2 signaling molecules, at the C5 position. The chain is Autoinducer-2 kinase from Yersinia pseudotuberculosis serotype O:1b (strain IP 31758).